The chain runs to 159 residues: Anaerobic nitrite reductase HB2 (159 aa).

One can recognise a Globin domain in the interval 2 to 152 (GFTEKQEGLV…LAEAIKAEMK (151 aa)). The Homodimerization signature appears at 35 to 39 (EIAPG). Ser-45, Lys-59, His-63, and His-98 together coordinate heme b. The short motif at 105 to 117 (DPHFEVVKEALLR) is the Homodimerization element.

This sequence belongs to the plant globin family. In terms of assembly, homodimer. Requires heme b as cofactor.

It localises to the cytoplasm. The protein resides in the nucleus. The catalysed reaction is Fe(III)-heme b-[protein] + nitric oxide + H2O = Fe(II)-heme b-[protein] + nitrite + 2 H(+). Its function is as follows. Phytoglobin that reduces nitrite to nitric oxide (NO) under anoxic conditions (e.g. during flooding or in waterlogged soil). May not function as an oxygen storage or transport protein. Has an unusually high affinity for O(2) through an hexacoordinate heme iron because of a very low dissociation constant. The protein is Anaerobic nitrite reductase HB2 of Gossypium hirsutum (Upland cotton).